The sequence spans 447 residues: Acyl-lipid (7-3)-desaturase (447 aa).

A Cytochrome b5 heme-binding domain is found at 36 to 94 (LTIVGDSVYDAKAFRSEHPGGAHFVSLFGGRDATEAFMEYHRRAWPKSRMSRFHVGSLA). Heme contacts are provided by H53 and H76. 3 helical membrane-spanning segments follow: residues 123-143 (GFAP…AIAL), 154-174 (LLPS…IQHD), and 185-205 (SVNL…ILWL). A Histidine box-1 motif is present at residues 173–177 (HDANH). The short motif at 208–213 (HVVMHH) is the Histidine box-2 element. The next 3 helical transmembrane spans lie at 244–264 (WLQH…LLFL), 286–306 (LFMP…ALPL), and 315–335 (AVCI…FFFI). The Histidine box-3 motif lies at 386 to 390 (QIEHH).

This sequence belongs to the fatty acid desaturase type 1 family. It depends on Fe(2+) as a cofactor.

The protein localises to the membrane. It carries out the reaction a (7Z,10Z,13Z,16Z,19Z)-docosapentaenoyl-containing glycerolipid + 2 Fe(II)-[cytochrome b5] + O2 + 2 H(+) = a (4Z,7Z,10Z,13Z,16Z,19Z)-docosahexaenoyl-containing glycerolipid + 2 Fe(III)-[cytochrome b5] + 2 H2O. The catalysed reaction is a (7Z,10Z,13Z,16Z)-docosatetraenoyl-containing glycerolipid + 2 Fe(II)-[cytochrome b5] + O2 + 2 H(+) = a (4Z,7Z,10Z,13Z,16Z)-docosapentaenoyl-containing glycerolipid + 2 Fe(III)-[cytochrome b5] + 2 H2O. Fatty acid desaturase that introduces a cis double bond at the 4-position in 22-carbon polyunsaturated fatty acids that contain a Delta(7) double bond, resulting in the production of delta-4 desaturated fatty acid docosahexanoic acid (DHA). The chain is Acyl-lipid (7-3)-desaturase from Rebecca salina (Marine microalga).